The primary structure comprises 407 residues: Probable tRNA sulfurtransferase (407 aa).

Residues 61 to 165 (NEIIQRLSKV…MDAIYIYEKV (105 aa)) enclose the THUMP domain. ATP contacts are provided by residues 183 to 184 (ML), 208 to 209 (HF), Arg-265, Gly-287, and Gln-296.

It belongs to the ThiI family.

It is found in the cytoplasm. It catalyses the reaction [ThiI sulfur-carrier protein]-S-sulfanyl-L-cysteine + a uridine in tRNA + 2 reduced [2Fe-2S]-[ferredoxin] + ATP + H(+) = [ThiI sulfur-carrier protein]-L-cysteine + a 4-thiouridine in tRNA + 2 oxidized [2Fe-2S]-[ferredoxin] + AMP + diphosphate. It carries out the reaction [ThiS sulfur-carrier protein]-C-terminal Gly-Gly-AMP + S-sulfanyl-L-cysteinyl-[cysteine desulfurase] + AH2 = [ThiS sulfur-carrier protein]-C-terminal-Gly-aminoethanethioate + L-cysteinyl-[cysteine desulfurase] + A + AMP + 2 H(+). Its pathway is cofactor biosynthesis; thiamine diphosphate biosynthesis. Its function is as follows. Catalyzes the ATP-dependent transfer of a sulfur to tRNA to produce 4-thiouridine in position 8 of tRNAs, which functions as a near-UV photosensor. Also catalyzes the transfer of sulfur to the sulfur carrier protein ThiS, forming ThiS-thiocarboxylate. This is a step in the synthesis of thiazole, in the thiamine biosynthesis pathway. The sulfur is donated as persulfide by IscS. The polypeptide is Probable tRNA sulfurtransferase (Staphylococcus epidermidis (strain ATCC 35984 / DSM 28319 / BCRC 17069 / CCUG 31568 / BM 3577 / RP62A)).